Consider the following 120-residue polypeptide: Large ribosomal subunit protein bL19 (120 aa).

The protein belongs to the bacterial ribosomal protein bL19 family.

Functionally, this protein is located at the 30S-50S ribosomal subunit interface and may play a role in the structure and function of the aminoacyl-tRNA binding site. This chain is Large ribosomal subunit protein bL19, found in Thermodesulfovibrio yellowstonii (strain ATCC 51303 / DSM 11347 / YP87).